We begin with the raw amino-acid sequence, 464 residues long: ATP-dependent protease ATPase subunit HslU (464 aa).

ATP is bound by residues I22, 64 to 69 (GVGKTE), D275, E340, and R412.

Belongs to the ClpX chaperone family. HslU subfamily. As to quaternary structure, a double ring-shaped homohexamer of HslV is capped on each side by a ring-shaped HslU homohexamer. The assembly of the HslU/HslV complex is dependent on binding of ATP.

It is found in the cytoplasm. In terms of biological role, ATPase subunit of a proteasome-like degradation complex; this subunit has chaperone activity. The binding of ATP and its subsequent hydrolysis by HslU are essential for unfolding of protein substrates subsequently hydrolyzed by HslV. HslU recognizes the N-terminal part of its protein substrates and unfolds these before they are guided to HslV for hydrolysis. This chain is ATP-dependent protease ATPase subunit HslU, found in Cytophaga hutchinsonii (strain ATCC 33406 / DSM 1761 / CIP 103989 / NBRC 15051 / NCIMB 9469 / D465).